The chain runs to 154 residues: Iron-sulfur cluster assembly 2 homolog, mitochondrial (154 aa).

A mitochondrion-targeting transit peptide spans 1–8 (MAAARGLS). The Fe cation site is built by Cys-79, Cys-144, and Cys-146.

It belongs to the HesB/IscA family. Heterotetramer; forms a dimer of dimers with IBA57. Interacts with [2Fe-2S]-ISCA2 forming the heterodimer [2Fe- 2S]-ISCA2-IBA57 complex; [2Fe-2S] cluster binding is absolutely required to promote the complex formation.

The protein resides in the mitochondrion. Its function is as follows. Involved in the maturation of mitochondrial 4Fe-4S proteins functioning late in the iron-sulfur cluster assembly pathway. May be involved in the binding of an intermediate of Fe/S cluster assembly. The chain is Iron-sulfur cluster assembly 2 homolog, mitochondrial (ISCA2) from Pongo abelii (Sumatran orangutan).